We begin with the raw amino-acid sequence, 363 residues long: Serpentine receptor class beta-17 (363 aa).

The next 7 helical transmembrane spans lie at 46–66, 75–95, 120–140, 169–189, 214–234, 273–293, and 304–324; these read AFLL…GSII, LLAF…SCFL, VILA…SMLC, IGFV…LYMY, YIFI…IGLY, CAQL…RIFL, and VTEF…ICIV.

Belongs to the nematode receptor-like protein srb family.

It localises to the membrane. This is Serpentine receptor class beta-17 (srb-17) from Caenorhabditis elegans.